Here is a 197-residue protein sequence, read N- to C-terminus: Sec-independent protein translocase protein TatB (197 aa).

A helical membrane pass occupies residues methionine 1–glycine 21. A disordered region spans residues lysine 93 to arginine 197. Composition is skewed to basic and acidic residues over residues lysine 104–aspartate 113 and asparagine 160–serine 169. The segment covering proline 180–arginine 197 has biased composition (low complexity).

This sequence belongs to the TatB family. As to quaternary structure, the Tat system comprises two distinct complexes: a TatABC complex, containing multiple copies of TatA, TatB and TatC subunits, and a separate TatA complex, containing only TatA subunits. Substrates initially bind to the TatABC complex, which probably triggers association of the separate TatA complex to form the active translocon.

The protein localises to the cell inner membrane. In terms of biological role, part of the twin-arginine translocation (Tat) system that transports large folded proteins containing a characteristic twin-arginine motif in their signal peptide across membranes. Together with TatC, TatB is part of a receptor directly interacting with Tat signal peptides. TatB may form an oligomeric binding site that transiently accommodates folded Tat precursor proteins before their translocation. This chain is Sec-independent protein translocase protein TatB, found in Pectobacterium atrosepticum (strain SCRI 1043 / ATCC BAA-672) (Erwinia carotovora subsp. atroseptica).